A 224-amino-acid chain; its full sequence is Protein-L-isoaspartate O-methyltransferase (224 aa).

Ser63 is an active-site residue.

This sequence belongs to the methyltransferase superfamily. L-isoaspartyl/D-aspartyl protein methyltransferase family.

It is found in the cytoplasm. It carries out the reaction [protein]-L-isoaspartate + S-adenosyl-L-methionine = [protein]-L-isoaspartate alpha-methyl ester + S-adenosyl-L-homocysteine. Functionally, catalyzes the methyl esterification of L-isoaspartyl residues in peptides and proteins that result from spontaneous decomposition of normal L-aspartyl and L-asparaginyl residues. It plays a role in the repair and/or degradation of damaged proteins. The protein is Protein-L-isoaspartate O-methyltransferase of Herpetosiphon aurantiacus (strain ATCC 23779 / DSM 785 / 114-95).